A 461-amino-acid polypeptide reads, in one-letter code: Steroidogenic factor 1 (461 aa).

Residues 10-85 constitute a DNA-binding region (nuclear receptor); it reads DELCPVCGDK…VGMRLEAVRA (76 aa). The NR C4-type zinc finger occupies 13-33; sequence CPVCGDKVSGYHYGLLTCESC. N6-acetyllysine occurs at positions 34, 38, and 72. The NR C4-type zinc finger occupies 49 to 73; the sequence is CTESQSCKIDKTQRKRCPFCRFQKC. A Glycyl lysine isopeptide (Lys-Gly) (interchain with G-Cter in SUMO) cross-link involves residue Lys-119. The disordered stretch occupies residues 119–150; sequence KLETGPPMGVAPPPPPPPDYMLPPGLHAPEPK. The span at 127 to 139 shows a compositional bias: pro residues; that stretch reads GVAPPPPPPPDYM. Lys-194 is covalently cross-linked (Glycyl lysine isopeptide (Lys-Gly) (interchain with G-Cter in SUMO)). Phosphoserine; by CDK7 is present on Ser-203. Positions 222–459 constitute an NR LBD domain; it reads GVPELIVQLL…NLLIEMLQAK (238 aa). Residues 230–461 are important for dimerization; sequence LLQLEPDEDQ…LIEMLQAKQT (232 aa). Positions 341, 436, and 440 each coordinate a 1,2-diacyl-sn-glycero-3-phosphocholine.

Belongs to the nuclear hormone receptor family. NR5 subfamily. Binds DNA as a monomer. Part of a complex consisting of SFPQ, NONO and NR5A1. Interacts with NR0B2, NCOA2 and PPARGC1A. Interacts with DGKQ and CDK7. Binds to and activated by HIPK3. In terms of processing, acetylation stimulates the transcriptional activity. Post-translationally, sumoylation reduces CDK7-mediated phosphorylation on Ser-203. Phosphorylated on Ser-203 by CDK7. This phosphorylation promotes transcriptional activity.

Its subcellular location is the nucleus. Its function is as follows. Transcriptional activator. Seems to be essential for sexual differentiation and formation of the primary steroidogenic tissues. Binds to the Ad4 site found in the promoter region of steroidogenic P450 genes such as CYP11A, CYP11B and CYP21B. Also regulates the AMH/Muellerian inhibiting substance gene as well as the AHCH and STAR genes. 5'-YCAAGGYC-3' and 5'-RRAGGTCA-3' are the consensus sequences for the recognition by NR5A1. The SFPQ-NONO-NR5A1 complex binds to the CYP17 promoter and regulates basal and cAMP-dependent transcriptional activity. Binds phosphatidylcholine and phospholipids with a phosphatidylinositol (PI) headgroup, in particular PI(3,4)P2 and PI(3,4,5)P3. Activated by the phosphorylation of NR5A1 by HIPK3 leading to increased steroidogenic gene expression upon cAMP signaling pathway stimulation. This Sus scrofa (Pig) protein is Steroidogenic factor 1 (NR5A1).